The chain runs to 201 residues: Adenylyl-sulfate kinase (201 aa).

Residues 1 to 23 (MALHDENVVWHSHPVTPQQREQH) form a disordered region. 35 to 42 (GLSGSGKS) contributes to the ATP binding site. Residue Ser109 is the Phosphoserine intermediate of the active site.

The protein belongs to the APS kinase family.

The enzyme catalyses adenosine 5'-phosphosulfate + ATP = 3'-phosphoadenylyl sulfate + ADP + H(+). The protein operates within sulfur metabolism; hydrogen sulfide biosynthesis; sulfite from sulfate: step 2/3. Functionally, catalyzes the synthesis of activated sulfate. The chain is Adenylyl-sulfate kinase from Escherichia coli O127:H6 (strain E2348/69 / EPEC).